Consider the following 102-residue polypeptide: Small ribosomal subunit protein uS10 (102 aa).

This sequence belongs to the universal ribosomal protein uS10 family. As to quaternary structure, part of the 30S ribosomal subunit.

Its function is as follows. Involved in the binding of tRNA to the ribosomes. The chain is Small ribosomal subunit protein uS10 from Methylocella silvestris (strain DSM 15510 / CIP 108128 / LMG 27833 / NCIMB 13906 / BL2).